We begin with the raw amino-acid sequence, 518 residues long: Hyccin (518 aa).

Disordered regions lie at residues 385–410 (GLRR…MDQL) and 466–492 (VFSG…EGVA). Positions 393–403 (SSKEKDKEKDA) are enriched in basic and acidic residues. A compositionally biased stretch (polar residues) spans 466 to 484 (VFSGNQPSSRASSPTSNHV).

Belongs to the Hyccin family. As to quaternary structure, component of a phosphatidylinositol 4-kinase (PI4K) complex.

It is found in the cytoplasm. The protein resides in the cytosol. The protein localises to the cell membrane. Component of a complex required to localize phosphatidylinositol 4-kinase (PI4K) to the plasma membrane. The complex acts as a regulator of phosphatidylinositol 4-phosphate (PtdIns(4)P) synthesis. In Danio rerio (Zebrafish), this protein is Hyccin (hycc1).